The sequence spans 411 residues: Translation initiation factor 2 subunit gamma (411 aa).

One can recognise a tr-type G domain in the interval 9 to 203; sequence QAEVNIGMVG…AIEEFIPTPK (195 aa). Residues 18 to 25 are G1; that stretch reads GHVDHGKT. Residues aspartate 21, threonine 25, glycine 46, and threonine 48 each coordinate Mg(2+). 21-26 provides a ligand contact to GTP; that stretch reads DHGKTT. Positions 46-50 are G2; the sequence is GITIK. 4 residues coordinate Zn(2+): cysteine 61, cysteine 64, cysteine 73, and cysteine 76. The G3 stretch occupies residues 90–93; sequence DSPG. GTP is bound by residues 146-149 and 181-183; these read NKIE and SAL. A G4 region spans residues 146-149; sequence NKIE. The interval 181-183 is G5; it reads SAL.

Belongs to the TRAFAC class translation factor GTPase superfamily. Classic translation factor GTPase family. EIF2G subfamily. Heterotrimer composed of an alpha, a beta and a gamma chain. Mg(2+) serves as cofactor.

The enzyme catalyses GTP + H2O = GDP + phosphate + H(+). EIF-2 functions in the early steps of protein synthesis by forming a ternary complex with GTP and initiator tRNA. The polypeptide is Translation initiation factor 2 subunit gamma (Pyrococcus furiosus (strain ATCC 43587 / DSM 3638 / JCM 8422 / Vc1)).